The following is a 185-amino-acid chain: Ribosome-recycling factor (185 aa).

It belongs to the RRF family.

The protein localises to the cytoplasm. Its function is as follows. Responsible for the release of ribosomes from messenger RNA at the termination of protein biosynthesis. May increase the efficiency of translation by recycling ribosomes from one round of translation to another. In Rhodospirillum centenum (strain ATCC 51521 / SW), this protein is Ribosome-recycling factor.